A 290-amino-acid polypeptide reads, in one-letter code: 33 kDa chaperonin (290 aa).

2 cysteine pairs are disulfide-bonded: Cys-235/Cys-237 and Cys-268/Cys-271.

It belongs to the HSP33 family. Under oxidizing conditions two disulfide bonds are formed involving the reactive cysteines. Under reducing conditions zinc is bound to the reactive cysteines and the protein is inactive.

It is found in the cytoplasm. Redox regulated molecular chaperone. Protects both thermally unfolding and oxidatively damaged proteins from irreversible aggregation. Plays an important role in the bacterial defense system toward oxidative stress. The protein is 33 kDa chaperonin of Streptococcus pyogenes serotype M49 (strain NZ131).